Reading from the N-terminus, the 267-residue chain is Hydroxyethylthiazole kinase 2 (267 aa).

A substrate-binding site is contributed by Met-41. ATP-binding residues include Lys-116 and Thr-166. Gly-193 is a binding site for substrate.

The protein belongs to the Thz kinase family. It depends on Mg(2+) as a cofactor.

The enzyme catalyses 5-(2-hydroxyethyl)-4-methylthiazole + ATP = 4-methyl-5-(2-phosphooxyethyl)-thiazole + ADP + H(+). It participates in cofactor biosynthesis; thiamine diphosphate biosynthesis; 4-methyl-5-(2-phosphoethyl)-thiazole from 5-(2-hydroxyethyl)-4-methylthiazole: step 1/1. Catalyzes the phosphorylation of the hydroxyl group of 4-methyl-5-beta-hydroxyethylthiazole (THZ). The sequence is that of Hydroxyethylthiazole kinase 2 from Streptococcus pneumoniae (strain P1031).